Here is a 153-residue protein sequence, read N- to C-terminus: Carbohydrate-binding protein AWN (153 aa).

An N-terminal signal peptide occupies residues 1–20; that stretch reads MKLAAPSLALLLSTATLVSG. An N-acetylalanine modification is found at Ala21. 2 disulfides stabilise this stretch: Cys29–Cys50 and Cys73–Cys94. One can recognise a CUB domain in the interval 29-130; the sequence is CGGVLRDPPG…SPFHIYYYAD (102 aa). Residues 93-130 are heparin-binding; it reads ICGGISLVFRSSSNIATIKYLRTSGQRASPFHIYYYAD.

The protein belongs to the spermadhesin family. Partial N-acetylation differentiates isoforms AWN-1 (not acetylated) and AWN-2 (acetylated).

The protein localises to the secreted. Its function is as follows. AWN proteins mediate the binding of boar spermatozoa to component(s) of the egg's zona pellucida by a carbohydrate-binding mechanism. Awn proteins are secretory components of the male accessory glands being coated to the sperm surface at the time of ejaculation. They possess as well heparin-, serine-protease-inhibitor-binding capability. The polypeptide is Carbohydrate-binding protein AWN (Sus scrofa (Pig)).